The sequence spans 178 residues: UPF0114 protein HPSH_00970 (178 aa).

Transmembrane regions (helical) follow at residues 15 to 35, 54 to 74, 102 to 122, and 145 to 165; these read WLLA…GYVF, LVLS…VLMV, FNAL…IFLL, and PIFW…LAAV.

The protein belongs to the UPF0114 family.

The protein localises to the cell membrane. The polypeptide is UPF0114 protein HPSH_00970 (Helicobacter pylori (strain Shi470)).